Reading from the N-terminus, the 624-residue chain is Chaperone protein HtpG (624 aa).

The tract at residues 1–336 (MKTQKKEVYN…SSDLPLNISR (336 aa)) is a; substrate-binding. The segment at 337-552 (EILQDNSITE…STEMTTQMAK (216 aa)) is b. A c region spans residues 553 to 624 (LFSAAGQSVP…ISRMNKLLIK (72 aa)).

The protein belongs to the heat shock protein 90 family. As to quaternary structure, homodimer.

The protein resides in the cytoplasm. Functionally, molecular chaperone. Has ATPase activity. The polypeptide is Chaperone protein HtpG (Buchnera aphidicola subsp. Acyrthosiphon pisum (strain APS) (Acyrthosiphon pisum symbiotic bacterium)).